A 135-amino-acid chain; its full sequence is UPF0299 membrane protein ECA2828 (135 aa).

4 helical membrane passes run 5–25 (FIVC…LLAG), 30–50 (ALLP…FTLL), 63–83 (GCYL…VGVM), and 93–113 (FGPI…VVGF).

Belongs to the UPF0299 family.

The protein resides in the cell inner membrane. The protein is UPF0299 membrane protein ECA2828 of Pectobacterium atrosepticum (strain SCRI 1043 / ATCC BAA-672) (Erwinia carotovora subsp. atroseptica).